The chain runs to 278 residues: Diaminopimelate epimerase (278 aa).

Positions 13, 46, and 66 each coordinate substrate. C75 (proton donor) is an active-site residue. Residues 76 to 77 (GN), N159, N192, and 210 to 211 (ER) each bind substrate. The active-site Proton acceptor is C219. 220 to 221 (GT) lines the substrate pocket.

Belongs to the diaminopimelate epimerase family. Homodimer.

The protein localises to the cytoplasm. It catalyses the reaction (2S,6S)-2,6-diaminopimelate = meso-2,6-diaminopimelate. Its pathway is amino-acid biosynthesis; L-lysine biosynthesis via DAP pathway; DL-2,6-diaminopimelate from LL-2,6-diaminopimelate: step 1/1. Functionally, catalyzes the stereoinversion of LL-2,6-diaminopimelate (L,L-DAP) to meso-diaminopimelate (meso-DAP), a precursor of L-lysine and an essential component of the bacterial peptidoglycan. The protein is Diaminopimelate epimerase of Laribacter hongkongensis (strain HLHK9).